A 481-amino-acid polypeptide reads, in one-letter code: MSKNKHELGSPFTVPLLLNTLDVPAFAVDADGAVVAWDDQIAALLETAPEDAIGVTDIGERLNDDGSRALANKVADTPIDAHHEYDGVGLADESYALLTGDYVYEDTTVAGNTDLWFIATPVYHTGEFRGVIEIVQDRSSSARYQSELQALFGELVDTLDAYDAGRFDATVDIAAEDTLLDDEYIQIGRNLTEFGDTLAAHITEVHNDVERLEAASQAVSESSAEIDELSTAQSTNVSTVATEVETLSATVQEIASTADEVVDTSATAERLADDGSAAASDAADMMADVATAADSVTSDVEALQNRIEDIDEVVDVITGIAEQTNMLALNASIEAARAGEEGEGFAVVAEEVKALAEDAQSNAGHIESLVSEIQRDTADTVTDLVTTTDRIEDAVAQVEDAMASFEEIVTAVEATAEGIEQVSDATNEQAASAEEIAAMVDETADLADDITTAVADIVSQTEAQSAMLHDLDESVSELHDQ.

The PAS domain occupies 10–81; it reads SPFTVPLLLN…NKVADTPIDA (72 aa). The 237-residue stretch at 208 to 444 folds into the Methyl-accepting transducer domain; the sequence is DVERLEAASQ…EIAAMVDETA (237 aa).

Belongs to the methyl-accepting chemotaxis (MCP) protein family.

The protein resides in the cytoplasm. Its function is as follows. Potentially involved in chemo- or phototactic signal transduction. This is Halobacterial transducer protein 9 (htr9) from Halobacterium salinarum (strain ATCC 700922 / JCM 11081 / NRC-1) (Halobacterium halobium).